Reading from the N-terminus, the 328-residue chain is DNA-directed RNA polymerase subunit alpha (328 aa).

The tract at residues 1–230 is alpha N-terminal domain (alpha-NTD); that stretch reads MIQITGRKFK…IILDHFMFIE (230 aa). The alpha C-terminal domain (alpha-CTD) stretch occupies residues 257-328; sequence PEDVMSKKVE…FGLSLRKGDK (72 aa).

It belongs to the RNA polymerase alpha chain family. Homodimer. The RNAP catalytic core consists of 2 alpha, 1 beta, 1 beta' and 1 omega subunit. When a sigma factor is associated with the core the holoenzyme is formed, which can initiate transcription.

The catalysed reaction is RNA(n) + a ribonucleoside 5'-triphosphate = RNA(n+1) + diphosphate. Its function is as follows. DNA-dependent RNA polymerase catalyzes the transcription of DNA into RNA using the four ribonucleoside triphosphates as substrates. The polypeptide is DNA-directed RNA polymerase subunit alpha (Fervidobacterium nodosum (strain ATCC 35602 / DSM 5306 / Rt17-B1)).